A 416-amino-acid polypeptide reads, in one-letter code: Vacuole membrane protein KMS1 (416 aa).

Glycine 2 is modified (N-acetylglycine). The Cytoplasmic segment spans residues 2–60 (GSAGVASSSSDVAISALREKHEKEVENLTLTTQPLNTLKLFVEATIQYIKRSISYLLAH). A helical membrane pass occupies residues 61–81 (GGWFILITTLLVVSGGLLVTV). Over 82–101 (DGPHGKHVEEVLEYVRYGLW) the chain is Lumenal. Residues 102-124 (WIALGVASSIGLGSGLHTFVLYL) traverse the membrane as a helical segment. Residues 125–257 (GPHIALFTLK…WLLTHSQHLN (133 aa)) lie on the Cytoplasmic side of the membrane. The helical transmembrane segment at 258–278 (FFTVLVLASVPNPLFDLAGIM) threads the bilayer. Over 279-289 (CGQFGIPFWEF) the chain is Lumenal. A helical transmembrane segment spans residues 290-312 (FLATLIGKAIIKTHIQTIFIICV). Topologically, residues 313-323 (CNNQLLDWMEN) are cytoplasmic. A helical membrane pass occupies residues 324–344 (ELIWILSHVPGLASMLPGLTA). Residues 345–372 (KLHAMKEKYIDAPSPVPSHIKVKKWDFS) are Lumenal-facing. The helical transmembrane segment at 373-393 (FASIWNGIVWLMLLNFFVKIV) threads the bilayer. Residues 394–416 (TATAQRHLKKKQEKEMATLTHSD) are Cytoplasmic-facing.

The protein belongs to the VMP1 family.

The protein resides in the endoplasmic reticulum membrane. Functionally, involved in the early secretory pathway. Required for the correct export of secretory products from the endoplasmic reticulum (ER) and involved in the maintenance of ER integrity. The polypeptide is Vacuole membrane protein KMS1 (Arabidopsis thaliana (Mouse-ear cress)).